Reading from the N-terminus, the 137-residue chain is Small ribosomal subunit protein uS11 (137 aa).

A compositionally biased stretch (low complexity) spans 1 to 11; the sequence is MAKQAKAGAAR. The disordered stretch occupies residues 1–32; sequence MAKQAKAGAARRPQRGRRRERKNVPRGQAHVQ. Positions 12–21 are enriched in basic residues; sequence RPQRGRRRER.

The protein belongs to the universal ribosomal protein uS11 family. As to quaternary structure, part of the 30S ribosomal subunit. Interacts with proteins S7 and S18. Binds to IF-3.

Functionally, located on the platform of the 30S subunit, it bridges several disparate RNA helices of the 16S rRNA. Forms part of the Shine-Dalgarno cleft in the 70S ribosome. This Herpetosiphon aurantiacus (strain ATCC 23779 / DSM 785 / 114-95) protein is Small ribosomal subunit protein uS11.